The sequence spans 308 residues: MSITGIDSSHVTESQGTLLFNEPLAEYTTWRVGGPAARLYKPANIDDLALFLSRLPFDEPLLWLGLGSNSLIRDGGFSGTVILTQGCLKEMTLLSDNCIRVEAGVSCASMARFSARNNLSGGEFWAGIPGTMGGALRMNAGCHGGETWQSVIEVQTINRRGEIRTRKPEEFEVAYRHVAGLGDEWFISAKLQLSPGNKETSLQLIKDLLAHRAKTQPTNEYNCGSVFRNPPGDFAARLIESCGLKGVSIGGAVVSEKHANFIINHQGTATAANIEALIHLVQTKVREQTSIELIREVHIIGDANVQTR.

The region spanning 32-196 (VGGPAARLYK…ISAKLQLSPG (165 aa)) is the FAD-binding PCMH-type domain. The active site involves Arg176. Catalysis depends on Ser225, which acts as the Proton donor. Glu296 is a catalytic residue.

This sequence belongs to the MurB family. FAD serves as cofactor.

Its subcellular location is the cytoplasm. The enzyme catalyses UDP-N-acetyl-alpha-D-muramate + NADP(+) = UDP-N-acetyl-3-O-(1-carboxyvinyl)-alpha-D-glucosamine + NADPH + H(+). The protein operates within cell wall biogenesis; peptidoglycan biosynthesis. Functionally, cell wall formation. This Legionella pneumophila (strain Lens) protein is UDP-N-acetylenolpyruvoylglucosamine reductase.